We begin with the raw amino-acid sequence, 448 residues long: Phosphoglucosamine mutase (448 aa).

Catalysis depends on Ser100, which acts as the Phosphoserine intermediate. 4 residues coordinate Mg(2+): Ser100, Asp240, Asp242, and Asp244. Ser100 is modified (phosphoserine).

The protein belongs to the phosphohexose mutase family. Mg(2+) is required as a cofactor. Activated by phosphorylation.

The catalysed reaction is alpha-D-glucosamine 1-phosphate = D-glucosamine 6-phosphate. Its function is as follows. Catalyzes the conversion of glucosamine-6-phosphate to glucosamine-1-phosphate. The protein is Phosphoglucosamine mutase of Bacillus cereus (strain B4264).